The sequence spans 152 residues: Superoxide dismutase [Cu-Zn] (152 aa).

Cu cation contacts are provided by His45, His47, and His62. Cys56 and Cys145 are disulfide-bonded. 4 residues coordinate Zn(2+): His62, His70, His79, and Asp82. His119 is a binding site for Cu cation.

The protein belongs to the Cu-Zn superoxide dismutase family. As to quaternary structure, homodimer. The cofactor is Cu cation. It depends on Zn(2+) as a cofactor.

It localises to the cytoplasm. It carries out the reaction 2 superoxide + 2 H(+) = H2O2 + O2. In terms of biological role, destroys radicals which are normally produced within the cells and which are toxic to biological systems. The protein is Superoxide dismutase [Cu-Zn] (SODCC) of Nicotiana plumbaginifolia (Leadwort-leaved tobacco).